The sequence spans 92 residues: MKIFNSVVRVKILALLYGLEYCEFNYLKEKLNLTDGNLEHHLKKLEECGFVETKKSVIKGRVKTIIKITNKGRVAFKNYIYEILQLSKNIEC.

This is an uncharacterized protein from Methanocaldococcus jannaschii (strain ATCC 43067 / DSM 2661 / JAL-1 / JCM 10045 / NBRC 100440) (Methanococcus jannaschii).